The chain runs to 101 residues: Small ribosomal subunit protein uS14 (101 aa).

This sequence belongs to the universal ribosomal protein uS14 family. As to quaternary structure, part of the 30S ribosomal subunit. Contacts proteins S3 and S10.

Binds 16S rRNA, required for the assembly of 30S particles and may also be responsible for determining the conformation of the 16S rRNA at the A site. The chain is Small ribosomal subunit protein uS14 from Shewanella baltica (strain OS155 / ATCC BAA-1091).